The primary structure comprises 293 residues: Protease HtpX homolog (293 aa).

2 consecutive transmembrane segments (helical) span residues Ile-5 to Leu-25 and Ala-43 to Ser-63. Residue His-148 participates in Zn(2+) binding. Glu-149 is a catalytic residue. His-152 serves as a coordination point for Zn(2+). 2 helical membrane-spanning segments follow: residues Val-159–Ile-179 and Phe-199–Trp-219. Glu-225 provides a ligand contact to Zn(2+).

It belongs to the peptidase M48B family. It depends on Zn(2+) as a cofactor.

It localises to the cell inner membrane. This chain is Protease HtpX homolog, found in Nitrosomonas europaea (strain ATCC 19718 / CIP 103999 / KCTC 2705 / NBRC 14298).